The sequence spans 156 residues: ATP synthase subunit b (156 aa).

Residues 7-27 (LIGQLIAFAIFVAFCMKFVWP) traverse the membrane as a helical segment.

Belongs to the ATPase B chain family. In terms of assembly, F-type ATPases have 2 components, F(1) - the catalytic core - and F(0) - the membrane proton channel. F(1) has five subunits: alpha(3), beta(3), gamma(1), delta(1), epsilon(1). F(0) has three main subunits: a(1), b(2) and c(10-14). The alpha and beta chains form an alternating ring which encloses part of the gamma chain. F(1) is attached to F(0) by a central stalk formed by the gamma and epsilon chains, while a peripheral stalk is formed by the delta and b chains.

Its subcellular location is the cell inner membrane. Functionally, f(1)F(0) ATP synthase produces ATP from ADP in the presence of a proton or sodium gradient. F-type ATPases consist of two structural domains, F(1) containing the extramembraneous catalytic core and F(0) containing the membrane proton channel, linked together by a central stalk and a peripheral stalk. During catalysis, ATP synthesis in the catalytic domain of F(1) is coupled via a rotary mechanism of the central stalk subunits to proton translocation. Component of the F(0) channel, it forms part of the peripheral stalk, linking F(1) to F(0). The chain is ATP synthase subunit b from Pasteurella multocida (strain Pm70).